The sequence spans 88 residues: Large ribosomal subunit protein bL27 (88 aa).

Residues 1-21 (MAHKKGASSSRNGRDSAAQRL) form a disordered region.

This sequence belongs to the bacterial ribosomal protein bL27 family.

The sequence is that of Large ribosomal subunit protein bL27 from Mycobacterium marinum (strain ATCC BAA-535 / M).